The following is a 362-amino-acid chain: MLRGVVGAFLVSLTVAGSYAVASHKTVTLSVDGAPMTVTTMKSRVIDIVEENGFEVSDRDDLFPAATETVHQSDTIVLRRSRPLEVSLDGEGTKQVWTTASTVDEALAQLRMTDKAPAAASRGSRVPLAGMALPVVSPKTVQIDDGGKVSTVHLAAPNVAGLLEAAGVPLEQNDKVVPAASSPVVDGMQIQVTRMRIEKVTERVPLAPGNERIEDPTMNMSRQVVEDPGAPGLQDVTFAIAKVNGVETGRLPVANQVIEPARNGVLRVGAKPGTEVPPVSNGHTWDALAQCEAGGNWAINTGNGFYGGVQFDQNTWERNGGLRYAPRADLATREEQIAIATVTQSRQGWGAWPVCSGRIGAR.

A signal peptide spans 1–22 (MLRGVVGAFLVSLTVAGSYAVA). Positions 192–272 (VTRMRIEKVT…NGVLRVGAKP (81 aa)) constitute a G5 domain.

The protein belongs to the transglycosylase family. Rpf subfamily.

Factor that stimulates resuscitation of dormant cells. Has peptidoglycan (PG) hydrolytic activity. Active in the pM concentration range. Has little to no effect on actively-growing cells. PG fragments could either directly activate the resuscitation pathway of dormant bacteria or serve as a substrate for endogenous Rpf, resulting in low molecular weight products with resuscitation activity. The sequence is that of Resuscitation-promoting factor RpfB (rpfB) from Mycolicibacterium smegmatis (strain ATCC 700084 / mc(2)155) (Mycobacterium smegmatis).